A 118-amino-acid chain; its full sequence is uncharacterized protein (118 aa).

This sequence belongs to the HesB/IscA family. Ycf83 subfamily.

This is an uncharacterized protein from Synechocystis sp. (strain ATCC 27184 / PCC 6803 / Kazusa).